The chain runs to 160 residues: Phosphopantetheine adenylyltransferase (160 aa).

Serine 11 lines the substrate pocket. ATP-binding positions include 11–12 (SF) and histidine 19. Substrate is bound by residues lysine 43, leucine 75, and arginine 89. ATP-binding positions include 90–92 (GLR), glutamate 100, and 125–131 (YSFISSS).

Belongs to the bacterial CoaD family. Homohexamer. It depends on Mg(2+) as a cofactor.

It localises to the cytoplasm. The enzyme catalyses (R)-4'-phosphopantetheine + ATP + H(+) = 3'-dephospho-CoA + diphosphate. The protein operates within cofactor biosynthesis; coenzyme A biosynthesis; CoA from (R)-pantothenate: step 4/5. Its function is as follows. Reversibly transfers an adenylyl group from ATP to 4'-phosphopantetheine, yielding dephospho-CoA (dPCoA) and pyrophosphate. This is Phosphopantetheine adenylyltransferase from Staphylococcus aureus (strain Mu3 / ATCC 700698).